The chain runs to 340 residues: Phosphate acyltransferase (340 aa).

It belongs to the PlsX family. As to quaternary structure, homodimer. Probably interacts with PlsY.

It is found in the cytoplasm. The enzyme catalyses a fatty acyl-[ACP] + phosphate = an acyl phosphate + holo-[ACP]. It functions in the pathway lipid metabolism; phospholipid metabolism. In terms of biological role, catalyzes the reversible formation of acyl-phosphate (acyl-PO(4)) from acyl-[acyl-carrier-protein] (acyl-ACP). This enzyme utilizes acyl-ACP as fatty acyl donor, but not acyl-CoA. This chain is Phosphate acyltransferase, found in Clostridioides difficile (strain 630) (Peptoclostridium difficile).